The primary structure comprises 421 residues: MLDPKLLKEKPQVIRDMLKARAVDFDLDGLIESDQKRREFIIKTDEFKKRRNEIGNEIAQKKKAGEDTSTILDEMKNVSAELAKLESQQEEIESKYAKLAFTVPNLVHESVPVGPDDTANKEMRKWGEIPQFDFKINDHIDMSENLDLVDLERAAKVAGARFYYLKNDLVRLNQSLIHFALDFLAEKEYSLVQPPYMINRSSMEGAVIADDFEEVIYKVEEEDLYMIGTSEHAMAAMHSKEIIEGKDLPIRYAGVSPCFRKEAGAHGRDQKGIFRVHQFDKIEQFVYARPEDSWKEHEKMLAVAEEFYQKLEIPHRVMLLSTGDMGKISAKTYDIEAWMAGQNSYREIVSCSNCLDYQARRLKIRFRDKTNEDTQYIHTLNSTLVATTRVLVSIMENFQTKDGHIKIPQVLQSYMGNQKEI.

229–231 (TSE) contacts L-serine. ATP contacts are provided by residues 260 to 262 (RKE) and Val276. Glu283 serves as a coordination point for L-serine. ATP is bound at residue 347-350 (EIVS). L-serine is bound at residue Thr383.

The protein belongs to the class-II aminoacyl-tRNA synthetase family. Type-1 seryl-tRNA synthetase subfamily. As to quaternary structure, homodimer. The tRNA molecule binds across the dimer.

Its subcellular location is the cytoplasm. The catalysed reaction is tRNA(Ser) + L-serine + ATP = L-seryl-tRNA(Ser) + AMP + diphosphate + H(+). The enzyme catalyses tRNA(Sec) + L-serine + ATP = L-seryl-tRNA(Sec) + AMP + diphosphate + H(+). It participates in aminoacyl-tRNA biosynthesis; selenocysteinyl-tRNA(Sec) biosynthesis; L-seryl-tRNA(Sec) from L-serine and tRNA(Sec): step 1/1. Its function is as follows. Catalyzes the attachment of serine to tRNA(Ser). Is also able to aminoacylate tRNA(Sec) with serine, to form the misacylated tRNA L-seryl-tRNA(Sec), which will be further converted into selenocysteinyl-tRNA(Sec). The chain is Serine--tRNA ligase from Nitrosopumilus maritimus (strain SCM1).